The chain runs to 164 residues: Galectin-3 (164 aa).

The Galectin domain occupies 9–154 (STVDLSEPLK…FSDVLGVTVL (146 aa)). Residues Asn-45, Arg-64, Asn-73, Arg-81, Glu-84, and Asn-138 each contribute to the a carbohydrate site.

In terms of assembly, homotetramer. Oligomerization is required for carbohydrate binding.

It localises to the secreted. It is found in the extracellular space. The protein resides in the extracellular matrix. The protein localises to the cell wall. Functionally, binds complex carbohydrates, such as chitooligosaccharides. Does not bind lactose. May play a role in fruiting body formation. This is Galectin-3 (Cgl3) from Coprinopsis cinerea (Inky cap fungus).